Reading from the N-terminus, the 249-residue chain is tRNA pseudouridine synthase A (249 aa).

The Nucleophile role is filled by aspartate 53. Position 111 (tyrosine 111) interacts with substrate.

The protein belongs to the tRNA pseudouridine synthase TruA family. Homodimer.

The enzyme catalyses uridine(38/39/40) in tRNA = pseudouridine(38/39/40) in tRNA. Functionally, formation of pseudouridine at positions 38, 39 and 40 in the anticodon stem and loop of transfer RNAs. The sequence is that of tRNA pseudouridine synthase A from Streptococcus equi subsp. equi (strain 4047).